A 122-amino-acid polypeptide reads, in one-letter code: ETPAEKFQRQHMDTEHSTASSSNYCNLMMKARDMTSGRCKPLNTFIHEPKSVVDAVCHQENVTCKNGRTNCYKSNSRLSITNCRQTGASKYPNCQYETSNLNKQIIVACEGQYVPVHFDAYV.

The segment covering 1–16 has biased composition (basic and acidic residues); sequence ETPAEKFQRQHMDTEH. Positions 1-20 are disordered; that stretch reads ETPAEKFQRQHMDTEHSTAS. Substrate is bound by residues K6 and R9. H11 functions as the Proton acceptor in the catalytic mechanism. 4 disulfides stabilise this stretch: C25-C83, C39-C94, C57-C109, and C64-C71. Substrate contacts are provided by residues 40 to 44, K65, and R84; that span reads KPLNT. H117 functions as the Proton donor in the catalytic mechanism.

The protein belongs to the pancreatic ribonuclease family. As to quaternary structure, monomer. Interacts with and forms tight 1:1 complexes with RNH1. Dimerization of two such complexes may occur. Interaction with RNH1 inhibits this protein. In terms of processing, not glycosylated although the sequence N-V-T, a recognition site for carbohydrate attachment, is present. As to expression, pancreas.

The protein resides in the secreted. It catalyses the reaction an [RNA] containing cytidine + H2O = an [RNA]-3'-cytidine-3'-phosphate + a 5'-hydroxy-ribonucleotide-3'-[RNA].. The catalysed reaction is an [RNA] containing uridine + H2O = an [RNA]-3'-uridine-3'-phosphate + a 5'-hydroxy-ribonucleotide-3'-[RNA].. Endonuclease that catalyzes the cleavage of RNA on the 3' side of pyrimidine nucleotides. Acts on single-stranded and double-stranded RNA. The polypeptide is Ribonuclease pancreatic (RNASE1) (Osphranter rufus (Red kangaroo)).